Here is a 281-residue protein sequence, read N- to C-terminus: DegV domain-containing protein SCO2569 (281 aa).

Positions V5–S280 constitute a DegV domain. T62 and S95 together coordinate hexadecanoate.

In terms of biological role, may bind long-chain fatty acids, such as palmitate, and may play a role in lipid transport or fatty acid metabolism. The sequence is that of DegV domain-containing protein SCO2569 from Streptomyces coelicolor (strain ATCC BAA-471 / A3(2) / M145).